We begin with the raw amino-acid sequence, 918 residues long: Exostosin-like 3 (918 aa).

Over methionine 1–threonine 30 the chain is Cytoplasmic. Residues methionine 1 to histidine 140 form a required for interaction with REG3A region. The helical; Signal-anchor for type II membrane protein transmembrane segment at tryptophan 31–leucine 51 threads the bilayer. Residues threonine 52–isoleucine 918 are Lumenal-facing. 2 disulfides stabilise this stretch: cysteine 177–cysteine 182 and cysteine 188–cysteine 236. Asparagine 290 carries N-linked (GlcNAc...) asparagine glycosylation. Position 361 is a phosphoserine (serine 361). A disulfide bond links cysteine 399 and cysteine 414. N-linked (GlcNAc...) asparagine glycosylation occurs at asparagine 591. Positions 667, 671, 696, 722, 727, 743, 744, and 745 each coordinate UDP-N-acetyl-alpha-D-glucosamine. Aspartate 745 is a binding site for Mn(2+). N-linked (GlcNAc...) asparagine glycosylation is present at asparagine 789. The cysteines at positions 830 and 878 are disulfide-linked. Residues glutamate 831, aspartate 832, and arginine 875 each coordinate UDP-N-acetyl-alpha-D-glucosamine. Residue aspartate 832 is part of the active site.

Belongs to the glycosyltransferase 47 family. As to quaternary structure, homodimer; disulfide-linked. Interacts with REG3A. Requires Mn(2+) as cofactor. Expressed in pancreatic islet beta-cells. Expressed in lung epithelial cells. Expressed in microglia.

It is found in the endoplasmic reticulum membrane. Its subcellular location is the golgi apparatus. It localises to the cell membrane. The protein localises to the nucleus. The enzyme catalyses 3-O-(beta-D-GlcA-(1-&gt;3)-beta-D-Gal-(1-&gt;3)-beta-D-Gal-(1-&gt;4)-beta-D-Xyl)-L-seryl-[protein] + UDP-N-acetyl-alpha-D-glucosamine = 3-O-(alpha-D-GlcNAc-(1-&gt;4)-beta-D-GlcA-(1-&gt;3)-beta-D-Gal-(1-&gt;3)-beta-D-Gal-(1-&gt;4)-beta-D-Xyl)-L-seryl-[protein] + UDP + H(+). It participates in glycan metabolism; heparan sulfate biosynthesis. Its function is as follows. Glycosyltransferase which regulates the biosynthesis of heparan sulfate (HS). Initiates HS synthesis by transferring the first N-acetyl-alpha-D-glucosamine (alpha-GlcNAc) residue (GlcNAcT-I activity) to the tetrasaccharide linker (GlcA-Gal-Gal-Xyl-)Ser core linker. May also transfer alpha-GlcNAc residues during HS elongation (GlcNAcT-II activity). Lacks glucuronyl transferase II (GlcAT-II) activity. Important for both skeletal development and hematopoiesis, through the formation of HS proteoglycans (HSPGs). Through the synthesis of HS, regulates postnatal pancreatic islet maturation and insulin secretion. Functionally, receptor for REG3A, REG3B and REG3G, induces the activation of downstream signaling pathways such as PI3K-AKT or RAS-RAF-MEK-ERK signaling pathway. Required for the function of REG3A in regulating keratinocyte proliferation and differentiation. Required for the inhibition of skin inflammation mediated by REG3A through the activation of PI3K-AKT-STAT3 pathway. Required for the function of REG3A and REG3G in glucose tolerance in pancreas. Expressed in microglia, is activated by nociceptor-derived REG3G in response to endotoxins, leading to the inhibition of kynurenine pathway to prevent endotoxic death. This is Exostosin-like 3 from Mus musculus (Mouse).